The chain runs to 1335 residues: Bifunctional autolysin (1335 aa).

Positions 1–29 are cleaved as a signal peptide; the sequence is MAKKFNYKLPSMVALTLFGTAFTAHQANA. Disordered stretches follow at residues 51–88, 100–262, and 514–535; these read QAEK…QSTT, NEIS…KYKE, and WGTT…NNKL. 5 stretches are compositionally biased toward polar residues: residues 58-88, 100-127, 143-155, 176-223, and 244-258; these read EVTQ…QSTT, NEIS…VTKN, TDTN…QSVA, TASQ…NASG, and SLNN…TTSY. The N-acetylmuramoyl-L-alanine amidase stretch occupies residues 303-863; it reads VSSQKTSSLP…LSTQSTPAPK (561 aa). Residues 515–531 are compositionally biased toward low complexity; that stretch reads GTTSTKPSQPSKPSGGT. GW domains are found at residues 533 to 610, 612 to 686, 700 to 774, 776 to 850, 868 to 943, 945 to 1020, and 1023 to 1096; these read NKLT…YNTA, APVK…TASK, TVTN…YNTA, SPVK…APSK, STQT…TQNI, KQTQ…QNST, and QSTP…KEKI. Residues 864-1335 are endo-beta-N-acetylglucosaminidase; it reads QVKPSTQTVN…GKYFEIPIYK (472 aa).

In the N-terminal section; belongs to the N-acetylmuramoyl-L-alanine amidase 2 family. The protein in the C-terminal section; belongs to the glycosyl hydrolase 73 family. In terms of assembly, oligomer; forms a ring structure at the cell surface which is important for efficient partitioning of daughter cells after cell division. In terms of processing, undergoes proteolytic processing to generate the two extracellular lytic enzymes, probably at the septal region on the cell surface.

Its subcellular location is the secreted. It catalyses the reaction Hydrolyzes the link between N-acetylmuramoyl residues and L-amino acid residues in certain cell-wall glycopeptides.. The catalysed reaction is an N(4)-(oligosaccharide-(1-&gt;3)-[oligosaccharide-(1-&gt;6)]-beta-D-Man-(1-&gt;4)-beta-D-GlcNAc-(1-&gt;4)-alpha-D-GlcNAc)-L-asparaginyl-[protein] + H2O = an oligosaccharide-(1-&gt;3)-[oligosaccharide-(1-&gt;6)]-beta-D-Man-(1-&gt;4)-D-GlcNAc + N(4)-(N-acetyl-beta-D-glucosaminyl)-L-asparaginyl-[protein]. Endohydrolysis of the di-N-acetylchitobiosyl unit in high-mannose glycopeptides and glycoproteins containing the -[(Man)5(GlcNAc)2]-Asn structure. One N-acetyl-D-glucosamine residue remains attached to the protein; the rest of the oligosaccharide is released intact. Cleaves the peptidoglycan connecting the daughter cells at the end of the cell division cycle, resulting in the separation of the two newly divided cells. Acts as an autolysin in penicillin-induced lysis. This chain is Bifunctional autolysin (atl), found in Staphylococcus epidermidis (strain ATCC 12228 / FDA PCI 1200).